A 222-amino-acid chain; its full sequence is Endonuclease V (222 aa).

Residues D34 and D102 each contribute to the Mg(2+) site.

It belongs to the endonuclease V family. It depends on Mg(2+) as a cofactor.

The protein resides in the cytoplasm. The catalysed reaction is Endonucleolytic cleavage at apurinic or apyrimidinic sites to products with a 5'-phosphate.. In terms of biological role, DNA repair enzyme involved in the repair of deaminated bases. Selectively cleaves double-stranded DNA at the second phosphodiester bond 3' to a deoxyinosine leaving behind the intact lesion on the nicked DNA. The chain is Endonuclease V from Proteus mirabilis (strain HI4320).